A 115-amino-acid chain; its full sequence is MKNNISKFPLSFSKSAIKKIKTIISEKNIPNLKFRVYIAGGGCSGFQYKFKFDKNKNKNDTIVNIFNNIIIIDPISLQYLRGGQIDYIENLEGSKFIILNPKAKHTCGCGSSFSI.

Residues Cys-43, Cys-107, and Cys-109 each coordinate iron-sulfur cluster.

It belongs to the HesB/IscA family. In terms of assembly, homodimer. Iron-sulfur cluster is required as a cofactor.

Its function is as follows. Required for insertion of 4Fe-4S clusters for at least IspG. The polypeptide is Iron-sulfur cluster insertion protein ErpA (Buchnera aphidicola subsp. Baizongia pistaciae (strain Bp)).